A 161-amino-acid polypeptide reads, in one-letter code: 6,7-dimethyl-8-ribityllumazine synthase (161 aa).

Residues Phe-23, 61–63 (SFE), and 85–87 (AVI) contribute to the 5-amino-6-(D-ribitylamino)uracil site. Residue 90–91 (DT) coordinates (2S)-2-hydroxy-3-oxobutyl phosphate. His-93 acts as the Proton donor in catalysis. Phe-118 is a binding site for 5-amino-6-(D-ribitylamino)uracil. Arg-132 contacts (2S)-2-hydroxy-3-oxobutyl phosphate.

It belongs to the DMRL synthase family.

It carries out the reaction (2S)-2-hydroxy-3-oxobutyl phosphate + 5-amino-6-(D-ribitylamino)uracil = 6,7-dimethyl-8-(1-D-ribityl)lumazine + phosphate + 2 H2O + H(+). It functions in the pathway cofactor biosynthesis; riboflavin biosynthesis; riboflavin from 2-hydroxy-3-oxobutyl phosphate and 5-amino-6-(D-ribitylamino)uracil: step 1/2. Its function is as follows. Catalyzes the formation of 6,7-dimethyl-8-ribityllumazine by condensation of 5-amino-6-(D-ribitylamino)uracil with 3,4-dihydroxy-2-butanone 4-phosphate. This is the penultimate step in the biosynthesis of riboflavin. This is 6,7-dimethyl-8-ribityllumazine synthase from Synechococcus sp. (strain WH7803).